A 252-amino-acid chain; its full sequence is Ribosomal RNA small subunit methyltransferase J (252 aa).

S-adenosyl-L-methionine contacts are provided by residues glutamate 126–arginine 127 and aspartate 176.

The protein belongs to the methyltransferase superfamily. RsmJ family.

The protein resides in the cytoplasm. The enzyme catalyses guanosine(1516) in 16S rRNA + S-adenosyl-L-methionine = N(2)-methylguanosine(1516) in 16S rRNA + S-adenosyl-L-homocysteine + H(+). Functionally, specifically methylates the guanosine in position 1516 of 16S rRNA. The protein is Ribosomal RNA small subunit methyltransferase J of Bdellovibrio bacteriovorus (strain ATCC 15356 / DSM 50701 / NCIMB 9529 / HD100).